The sequence spans 1052 residues: Multidrug resistance protein MdtB (1052 aa).

The next 11 helical transmembrane spans lie at 15–37, 345–362, 367–389, 396–418, 438–460, 472–494, 535–557, 867–889, 909–931, 968–990, and 1000–1022; these read LFIL…GIIG, FELL…YLFL, ATII…MYFL, LTLM…VIEN, GEIG…PLLF, FAVT…TPMM, HPWL…YLLI, LWLI…ESFI, LMLT…IGIV, ILMT…GVGA, and MVGG…YLLF. Residues 1032–1052 form a disordered region; it reads KNRHRDEDIDSSELLNGQEPQ.

This sequence belongs to the resistance-nodulation-cell division (RND) (TC 2.A.6) family. MdtB subfamily. As to quaternary structure, part of a tripartite efflux system composed of MdtA, MdtB and MdtC. MdtB forms a heteromultimer with MdtC.

The protein localises to the cell inner membrane. The protein is Multidrug resistance protein MdtB of Yersinia pestis.